A 415-amino-acid chain; its full sequence is Small ribosomal subunit protein uS5m (415 aa).

Positions 1–31 are disordered; that stretch reads MRRSGPELWKTLTSVSKSGQKKGRRNTRQPV. Residues 131-197 enclose the S5 DRBM domain; it reads FETYCLEVKR…GMASRKIFHV (67 aa). The tract at residues 396-415 is disordered; sequence GVEPMPLGIGLSHVVPKKDD.

Belongs to the universal ribosomal protein uS5 family. Component of the mitochondrial ribosome small subunit (28S) which comprises a 12S rRNA and about 30 distinct proteins.

The protein localises to the mitochondrion. This Caenorhabditis briggsae protein is Small ribosomal subunit protein uS5m (mrps-5).